We begin with the raw amino-acid sequence, 255 residues long: Anamorsin homolog (255 aa).

The interval 1-163 (MPKETLVVSK…VRPNWKSKTD (163 aa)) is N-terminal SAM-like domain. Residues 164–185 (KKSPSMIDAAPIDGYISKAPDY) are linker. Residues Cys-188, Cys-195, Cys-198, and Cys-200 each contribute to the [2Fe-2S] cluster site. A fe-S binding site A region spans residues 188–200 (CSTKPRACANCTC). Positions 224, 227, 235, and 238 each coordinate [4Fe-4S] cluster. 2 short sequence motifs (cx2C motif) span residues 224-227 (CGNC) and 235-238 (CESC). The tract at residues 224 to 238 (CGNCYLGDAFRCESC) is fe-S binding site B.

The protein belongs to the anamorsin family. Monomer. Requires [2Fe-2S] cluster as cofactor. It depends on [4Fe-4S] cluster as a cofactor.

Its subcellular location is the cytoplasm. It localises to the mitochondrion intermembrane space. Its function is as follows. Component of the cytosolic iron-sulfur (Fe-S) protein assembly (CIA) machinery. Required for the maturation of extramitochondrial Fe-S proteins. Part of an electron transfer chain functioning in an early step of cytosolic Fe-S biogenesis, facilitating the de novo assembly of a [4Fe-4S] cluster on the cytosolic Fe-S scaffold complex. Electrons are transferred from NADPH via a FAD- and FMN-containing diflavin oxidoreductase. Together with the diflavin oxidoreductase, also required for the assembly of the diferric tyrosyl radical cofactor of ribonucleotide reductase (RNR), probably by providing electrons for reduction during radical cofactor maturation in the catalytic small subunit. This is Anamorsin homolog from Theileria annulata.